The chain runs to 386 residues: Patatin-15 (386 aa).

The signal sequence occupies residues 1–23 (MATTKSFLILFFMILATTSSTCA). Residues 32–229 (LSIDGGGIKG…TVGDPALLSL (198 aa)) enclose the PNPLA domain. Residues 36-41 (GGGIKG) carry the GXGXXG motif. The GXSXG signature appears at 75–79 (GTSTG). Residue S77 is the Nucleophile of the active site. Residue N115 is glycosylated (N-linked (GlcNAc...) asparagine). The active-site Proton acceptor is the D215. A DGA/G motif is present at residues 215-217 (DGG). Residues 321–384 (ENALTGTTTE…DRKKLRANKA (64 aa)) are a coiled coil.

It belongs to the patatin family. Tuber.

It localises to the vacuole. Its function is as follows. Probable lipolytic acyl hydrolase (LAH), an activity which is thought to be involved in the response of tubers to pathogens. The sequence is that of Patatin-15 from Solanum tuberosum (Potato).